A 130-amino-acid chain; its full sequence is Phosphoribosyl-AMP cyclohydrolase (130 aa).

Asp-77 is a binding site for Mg(2+). Cys-78 lines the Zn(2+) pocket. Positions 79 and 81 each coordinate Mg(2+). Positions 95 and 102 each coordinate Zn(2+).

It belongs to the PRA-CH family. In terms of assembly, homodimer. The cofactor is Mg(2+). Zn(2+) serves as cofactor.

Its subcellular location is the cytoplasm. It catalyses the reaction 1-(5-phospho-beta-D-ribosyl)-5'-AMP + H2O = 1-(5-phospho-beta-D-ribosyl)-5-[(5-phospho-beta-D-ribosylamino)methylideneamino]imidazole-4-carboxamide. Its pathway is amino-acid biosynthesis; L-histidine biosynthesis; L-histidine from 5-phospho-alpha-D-ribose 1-diphosphate: step 3/9. Functionally, catalyzes the hydrolysis of the adenine ring of phosphoribosyl-AMP. In Pseudomonas syringae pv. tomato (strain ATCC BAA-871 / DC3000), this protein is Phosphoribosyl-AMP cyclohydrolase.